The sequence spans 101 residues: uncharacterized protein (101 aa).

The next 3 membrane-spanning stretches (helical) occupy residues 10–32 (FLPNFLLLGAGTALVLCLVFFLY), 45–67 (LGIWGSAVGLLMDTISLWNLPLI), and 77–99 (IAFTIWMVCAYCMYLLIPLILSH).

It localises to the cell membrane. This is an uncharacterized protein from Bacillus subtilis (strain 168).